Consider the following 144-residue polypeptide: Large ribosomal subunit protein eL27 (144 aa).

One can recognise a KOW domain in the interval 6–43; that stretch reads IKPGRLVILLNGKYAGRKAVVIKTFDDATASKSRPYGH.

Belongs to the eukaryotic ribosomal protein eL27 family.

This is Large ribosomal subunit protein eL27 (rpl27) from Dictyostelium discoideum (Social amoeba).